Here is a 425-residue protein sequence, read N- to C-terminus: Elongation factor 1-alpha (425 aa).

A tr-type G domain is found at 5–221 (KPHMNLAVIG…DTFKEPSKPT (217 aa)). The interval 14–21 (GHIDHGKS) is G1. Residue 14-21 (GHIDHGKS) coordinates GTP. Position 21 (Ser-21) interacts with Mg(2+). Residues 70-74 (GITID) form a G2 region. The interval 91-94 (DCPG) is G3. GTP contacts are provided by residues 91–95 (DCPGH) and 146–149 (NKMD). The G4 stretch occupies residues 146–149 (NKMD). The segment at 185 to 187 (SSL) is G5.

Belongs to the TRAFAC class translation factor GTPase superfamily. Classic translation factor GTPase family. EF-Tu/EF-1A subfamily.

The protein resides in the cytoplasm. The catalysed reaction is GTP + H2O = GDP + phosphate + H(+). Its function is as follows. GTP hydrolase that promotes the GTP-dependent binding of aminoacyl-tRNA to the A-site of ribosomes during protein biosynthesis. The chain is Elongation factor 1-alpha from Methanoregula boonei (strain DSM 21154 / JCM 14090 / 6A8).